We begin with the raw amino-acid sequence, 104 residues long: Protein KleF (104 aa).

The polypeptide is Protein KleF (kleF) (Escherichia coli).